The primary structure comprises 130 residues: Small ribosomal subunit protein uS9 (130 aa).

The protein belongs to the universal ribosomal protein uS9 family.

The protein is Small ribosomal subunit protein uS9 of Vibrio vulnificus (strain CMCP6).